Consider the following 459-residue polypeptide: Spermidine/putrescine import ATP-binding protein PotA (459 aa).

Positions 15–334 (IELIDIVKQF…PRNIWVAKFI (320 aa)) constitute an ABC transporter domain. Residue 47-54 (GPSGSGKT) participates in ATP binding. The insert stretch occupies residues 115–203 (RVPKENVKKE…EEFKNKYFKR (89 aa)).

Belongs to the ABC transporter superfamily. Spermidine/putrescine importer (TC 3.A.1.11.1) family. The complex is composed of two ATP-binding proteins (PotA), two transmembrane proteins (PotB and PotC) and a solute-binding protein (PotD).

The protein resides in the cell membrane. It catalyses the reaction ATP + H2O + polyamine-[polyamine-binding protein]Side 1 = ADP + phosphate + polyamineSide 2 + [polyamine-binding protein]Side 1.. Functionally, part of the ABC transporter complex PotABCD involved in spermidine/putrescine import. Responsible for energy coupling to the transport system. The polypeptide is Spermidine/putrescine import ATP-binding protein PotA (Mycoplasmopsis synoviae (strain 53) (Mycoplasma synoviae)).